Consider the following 881-residue polypeptide: Protein translocase subunit SecA (881 aa).

ATP-binding positions include Gln83, 101–105 (GEGKT), and Asp492.

It belongs to the SecA family.

The protein localises to the plastid. The protein resides in the chloroplast stroma. It is found in the chloroplast thylakoid membrane. It carries out the reaction ATP + H2O + cellular proteinSide 1 = ADP + phosphate + cellular proteinSide 2.. Functionally, has a central role in coupling the hydrolysis of ATP to the transfer of proteins across the thylakoid membrane. The chain is Protein translocase subunit SecA from Emiliania huxleyi (Coccolithophore).